The chain runs to 78 residues: MSAICQVTGRQPGYGKSVSHSHRRTSRRWNPNVQRRKFYLPSEGRTITLNVSTKGLKVIDRDGIESVVAKIRARGEKI.

The tract at residues 1–28 is disordered; that stretch reads MSAICQVTGRQPGYGKSVSHSHRRTSRR.

The protein belongs to the bacterial ribosomal protein bL28 family.

The sequence is that of Large ribosomal subunit protein bL28 from Corynebacterium diphtheriae (strain ATCC 700971 / NCTC 13129 / Biotype gravis).